A 438-amino-acid polypeptide reads, in one-letter code: 3-phosphoshikimate 1-carboxyvinyltransferase (438 aa).

3-phosphoshikimate contacts are provided by Lys-26, Ser-27, and Arg-31. Lys-26 lines the phosphoenolpyruvate pocket. Positions 99 and 127 each coordinate phosphoenolpyruvate. 3-phosphoshikimate-binding residues include Ser-170, Ser-171, Gln-172, Ser-199, Glu-314, and His-343. Gln-172 contributes to the phosphoenolpyruvate binding site. The active-site Proton acceptor is Glu-314. 3 residues coordinate phosphoenolpyruvate: Arg-347, Arg-388, and Lys-413.

Belongs to the EPSP synthase family. Monomer.

It is found in the cytoplasm. It catalyses the reaction 3-phosphoshikimate + phosphoenolpyruvate = 5-O-(1-carboxyvinyl)-3-phosphoshikimate + phosphate. It participates in metabolic intermediate biosynthesis; chorismate biosynthesis; chorismate from D-erythrose 4-phosphate and phosphoenolpyruvate: step 6/7. In terms of biological role, catalyzes the transfer of the enolpyruvyl moiety of phosphoenolpyruvate (PEP) to the 5-hydroxyl of shikimate-3-phosphate (S3P) to produce enolpyruvyl shikimate-3-phosphate and inorganic phosphate. This is 3-phosphoshikimate 1-carboxyvinyltransferase from Mycobacterium sp. (strain JLS).